The primary structure comprises 773 residues: Endonuclease MutS2 (773 aa).

Position 334 to 341 (334 to 341 (GANAGGKT)) interacts with ATP. The Smr domain maps to 698–773 (VDLRGMRADV…GDGMTMVTLK (76 aa)).

This sequence belongs to the DNA mismatch repair MutS family. MutS2 subfamily. Homodimer. Binds to stalled ribosomes, contacting rRNA.

Functionally, endonuclease that is involved in the suppression of homologous recombination and thus may have a key role in the control of bacterial genetic diversity. Acts as a ribosome collision sensor, splitting the ribosome into its 2 subunits. Detects stalled/collided 70S ribosomes which it binds and splits by an ATP-hydrolysis driven conformational change. Acts upstream of the ribosome quality control system (RQC), a ribosome-associated complex that mediates the extraction of incompletely synthesized nascent chains from stalled ribosomes and their subsequent degradation. Probably generates substrates for RQC. This Solidesulfovibrio magneticus (strain ATCC 700980 / DSM 13731 / RS-1) (Desulfovibrio magneticus) protein is Endonuclease MutS2.